We begin with the raw amino-acid sequence, 367 residues long: tRNA N6-adenosine threonylcarbamoyltransferase (367 aa).

Fe cation-binding residues include His123 and His127. Residues 145–149 (LVSGG), Asp178, Gly191, and Asn288 each bind substrate. A Fe cation-binding site is contributed by Asp316.

The protein belongs to the KAE1 / TsaD family. The cofactor is Fe(2+).

The protein localises to the cytoplasm. It carries out the reaction L-threonylcarbamoyladenylate + adenosine(37) in tRNA = N(6)-L-threonylcarbamoyladenosine(37) in tRNA + AMP + H(+). Functionally, required for the formation of a threonylcarbamoyl group on adenosine at position 37 (t(6)A37) in tRNAs that read codons beginning with adenine. Is involved in the transfer of the threonylcarbamoyl moiety of threonylcarbamoyl-AMP (TC-AMP) to the N6 group of A37, together with TsaE and TsaB. TsaD likely plays a direct catalytic role in this reaction. The sequence is that of tRNA N6-adenosine threonylcarbamoyltransferase from Caulobacter vibrioides (strain ATCC 19089 / CIP 103742 / CB 15) (Caulobacter crescentus).